A 363-amino-acid chain; its full sequence is Des-methyl DIF-1 methyltransferase A (363 aa).

Residues G195, D221, D250, L251, and K266 each contribute to the S-adenosyl-L-methionine site. The active-site Proton acceptor is H270.

The protein belongs to the class I-like SAM-binding methyltransferase superfamily. Cation-independent O-methyltransferase family. COMT subfamily.

The enzyme catalyses (3,5-dichloro-2,4,6-trihydroxyphenyl)hexan-1-one + S-adenosyl-L-methionine = 1-(3,5-dichloro-2,6-dihydroxy-4-methoxyphenyl)hexan-1-one + S-adenosyl-L-homocysteine + H(+). Its function is as follows. O-methyltransferase; part of the gene cluster that mediates the biosynthesis of DIF-1 (Differentiation Inducing Factor-1), a signal molecule involved in the differentiation of pstO (prestalk-O) cells. The three-step process begins with the formation of (2,4,6-trihydroxyphenyl)-1-hexan-1-one (THPH) by the polyketide synthase StlB. THPH is then dichlorinated by the flavin-dependent halogenase ChlA. The last step of DIF-1 biosynthesis is the O-methylation of dichloro-THPH (or des-methyl-DIF-1) by the methyltransferase DmtA to yield DIF-1. The polypeptide is Des-methyl DIF-1 methyltransferase A (Dictyostelium discoideum (Social amoeba)).